The chain runs to 211 residues: Endo-1,4-beta-xylanase 6 (211 aa).

A signal peptide spans 1–16 (MKVTAAFAGLLVTALA). The 192-residue stretch at 19 to 210 (APEPVLVSRS…GAGSASVTIS (192 aa)) folds into the GH11 domain. The Nucleophile role is filled by Glu106. Glu197 serves as the catalytic Proton donor.

It belongs to the glycosyl hydrolase 11 (cellulase G) family.

Its subcellular location is the secreted. It carries out the reaction Endohydrolysis of (1-&gt;4)-beta-D-xylosidic linkages in xylans.. Its pathway is glycan degradation; xylan degradation. Endo-1,4-beta-xylanase involved in the hydrolysis of xylan, a major structural heterogeneous polysaccharide found in plant biomass representing the second most abundant polysaccharide in the biosphere, after cellulose. In Aspergillus niger, this protein is Endo-1,4-beta-xylanase 6 (XYN6).